The chain runs to 121 residues: MIIVTNTIKVEKGAAEHVIRQFTGANGDGHPTKDIAEVEGFLGFELWHSKPEDKDYEEVVVTSKWESEEAQRNWVKSDSFKKAHGRTKDTREQREDRKGIVGNEIARFEVVHVQNPVTIEK.

An ABM domain is found at 2–101; sequence IIVTNTIKVE…EQREDRKGIV (100 aa). N6 provides a ligand contact to Fe cation. The interval 76-98 is disordered; the sequence is KSDSFKKAHGRTKDTREQREDRK. The segment covering 78–98 has biased composition (basic and acidic residues); the sequence is DSFKKAHGRTKDTREQREDRK. H84 contacts heme.

Belongs to the antibiotic biosynthesis monooxygenase family. Heme-degrading monooxygenase IsdG subfamily. As to quaternary structure, homodimer.

The protein localises to the cytoplasm. It carries out the reaction heme b + 3 reduced [NADPH--hemoprotein reductase] + 3 O2 = biliverdin IXalpha + CO + Fe(2+) + 3 oxidized [NADPH--hemoprotein reductase] + 3 H2O + H(+). In terms of biological role, allows bacterial pathogens to use the host heme as an iron source. Catalyzes the oxidative degradation of the heme macrocyclic porphyrin ring to the biliverdin in the presence of a suitable electron donor such as ascorbate or NADPH--cytochrome P450 reductase, with subsequent release of free iron. This Listeria welshimeri serovar 6b (strain ATCC 35897 / DSM 20650 / CCUG 15529 / CIP 8149 / NCTC 11857 / SLCC 5334 / V8) protein is Heme-degrading monooxygenase.